The following is a 148-amino-acid chain: UPF0178 protein SH2212 (148 aa).

The protein belongs to the UPF0178 family.

This chain is UPF0178 protein SH2212, found in Staphylococcus haemolyticus (strain JCSC1435).